The primary structure comprises 795 residues: Lon protease (795 aa).

The 198-residue stretch at 17–214 folds into the Lon N-terminal domain; the sequence is YPLMPLRDIV…KVYKFLQDEI (198 aa). An ATP-binding site is contributed by 370-377; that stretch reads GPPGVGKT. The Lon proteolytic domain maps to 605 to 787; the sequence is KPLVGVATGL…EEVFKIALVR (183 aa). Catalysis depends on residues Ser692 and Lys735.

It belongs to the peptidase S16 family. As to quaternary structure, homohexamer. Organized in a ring with a central cavity.

Its subcellular location is the cytoplasm. The enzyme catalyses Hydrolysis of proteins in presence of ATP.. ATP-dependent serine protease that mediates the selective degradation of mutant and abnormal proteins as well as certain short-lived regulatory proteins. Required for cellular homeostasis and for survival from DNA damage and developmental changes induced by stress. Degrades polypeptides processively to yield small peptide fragments that are 5 to 10 amino acids long. Binds to DNA in a double-stranded, site-specific manner. The polypeptide is Lon protease (Aquifex aeolicus (strain VF5)).